Consider the following 374-residue polypeptide: Chaperone protein DnaJ (374 aa).

The J domain maps to 5-70 (DYYEVLGVNL…RKRASYDQFG (66 aa)). Residues 133–210 (GLSRTIKVPT…CHGQGRQQQT (78 aa)) form a CR-type zinc finger. Residues Cys-146, Cys-149, Cys-162, Cys-165, Cys-184, Cys-187, Cys-198, and Cys-201 each contribute to the Zn(2+) site. CXXCXGXG motif repeat units lie at residues 146 to 153 (CKTCNGSG), 162 to 169 (CPRCNGSG), 184 to 191 (CSVCRGRG), and 198 to 205 (CTDCHGQG).

It belongs to the DnaJ family. As to quaternary structure, homodimer. Requires Zn(2+) as cofactor.

It localises to the cytoplasm. Its function is as follows. Participates actively in the response to hyperosmotic and heat shock by preventing the aggregation of stress-denatured proteins and by disaggregating proteins, also in an autonomous, DnaK-independent fashion. Unfolded proteins bind initially to DnaJ; upon interaction with the DnaJ-bound protein, DnaK hydrolyzes its bound ATP, resulting in the formation of a stable complex. GrpE releases ADP from DnaK; ATP binding to DnaK triggers the release of the substrate protein, thus completing the reaction cycle. Several rounds of ATP-dependent interactions between DnaJ, DnaK and GrpE are required for fully efficient folding. Also involved, together with DnaK and GrpE, in the DNA replication of plasmids through activation of initiation proteins. In Coxiella burnetii (strain RSA 331 / Henzerling II), this protein is Chaperone protein DnaJ.